A 115-amino-acid chain; its full sequence is Large ribosomal subunit protein uL22 (115 aa).

The protein belongs to the universal ribosomal protein uL22 family. As to quaternary structure, part of the 50S ribosomal subunit.

Functionally, this protein binds specifically to 23S rRNA; its binding is stimulated by other ribosomal proteins, e.g. L4, L17, and L20. It is important during the early stages of 50S assembly. It makes multiple contacts with different domains of the 23S rRNA in the assembled 50S subunit and ribosome. The globular domain of the protein is located near the polypeptide exit tunnel on the outside of the subunit, while an extended beta-hairpin is found that lines the wall of the exit tunnel in the center of the 70S ribosome. The chain is Large ribosomal subunit protein uL22 from Streptomyces avermitilis (strain ATCC 31267 / DSM 46492 / JCM 5070 / NBRC 14893 / NCIMB 12804 / NRRL 8165 / MA-4680).